A 180-amino-acid chain; its full sequence is Ribulose bisphosphate carboxylase small subunit, chloroplastic 2 (180 aa).

The transit peptide at Met-1–Lys-56 directs the protein to the chloroplast.

It belongs to the RuBisCO small chain family. In terms of assembly, heterohexadecamer of 8 large and 8 small subunits.

It localises to the plastid. It is found in the chloroplast. RuBisCO catalyzes two reactions: the carboxylation of D-ribulose 1,5-bisphosphate, the primary event in carbon dioxide fixation, as well as the oxidative fragmentation of the pentose substrate. Both reactions occur simultaneously and in competition at the same active site. Although the small subunit is not catalytic it is essential for maximal activity. This chain is Ribulose bisphosphate carboxylase small subunit, chloroplastic 2, found in Pisum sativum (Garden pea).